A 130-amino-acid chain; its full sequence is Small ribosomal subunit protein uS8 (130 aa).

The protein belongs to the universal ribosomal protein uS8 family. As to quaternary structure, part of the 30S ribosomal subunit. Contacts proteins S5 and S12.

Its function is as follows. One of the primary rRNA binding proteins, it binds directly to 16S rRNA central domain where it helps coordinate assembly of the platform of the 30S subunit. The protein is Small ribosomal subunit protein uS8 of Ectopseudomonas mendocina (strain ymp) (Pseudomonas mendocina).